The chain runs to 503 residues: Maturase K (503 aa).

The protein belongs to the intron maturase 2 family. MatK subfamily.

The protein localises to the plastid. The protein resides in the chloroplast. In terms of biological role, usually encoded in the trnK tRNA gene intron. Probably assists in splicing its own and other chloroplast group II introns. The chain is Maturase K from Silene latifolia (White campion).